Here is a 297-residue protein sequence, read N- to C-terminus: Transmembrane protein 178A (297 aa).

The first 25 residues, 1 to 25 (MEPRALVTALSLGLSLCSLGLLVTA), serve as a signal peptide directing secretion. At 26-179 (IFTDHWYETD…LLHLRRITAG (154 aa)) the chain is on the extracellular side. Basic and acidic residues predominate over residues 41 to 57 (ESCERSRAGADPPDQKN). Positions 41 to 86 (ESCERSRAGADPPDQKNRLMPLSHLPLRDSPPLGRRLLPGGPGRSD) are disordered. The segment covering 68-79 (RDSPPLGRRLLP) has biased composition (low complexity). Asn158 is a glycosylation site (N-linked (GlcNAc...) asparagine). The helical transmembrane segment at 180–200 (FLGMAVAVLLCGCIVATVSFF) threads the bilayer. At 201–208 (WEESLTQH) the chain is on the cytoplasmic side. Residues 209-229 (VAGLLFLMTGIFCTISLCTYA) traverse the membrane as a helical segment. Residues 230–257 (ASVSYDLNRVPKLIYSLPHDVEHGYSWS) are Extracellular-facing. A helical membrane pass occupies residues 258–278 (IFCAWCSLGFIVAAGGLCIAY). The Cytoplasmic portion of the chain corresponds to 279–297 (PFISRTKIAHLKSGRDSTV).

Belongs to the TMEM178 family. Interacts with STIM1. Highly expressed in the bone and its expression increases during osteoclastogenesis.

It localises to the endoplasmic reticulum membrane. In terms of biological role, acts as a negative regulator of osteoclast differentiation in basal and inflammatory conditions by regulating TNFSF11-induced Ca (2+) fluxes, thereby controlling the induction of NFATC1. The sequence is that of Transmembrane protein 178A (Tmem178a) from Mus musculus (Mouse).